Here is a 276-residue protein sequence, read N- to C-terminus: 4-hydroxy-tetrahydrodipicolinate reductase (276 aa).

Residues 10–15, aspartate 36, and 109–111 contribute to the NAD(+) site; these read GALGKM and GTT. Histidine 165 serves as the catalytic Proton donor/acceptor. (S)-2,3,4,5-tetrahydrodipicolinate is bound at residue histidine 166. The Proton donor role is filled by lysine 169. 175–176 is a (S)-2,3,4,5-tetrahydrodipicolinate binding site; it reads GT.

It belongs to the DapB family.

It is found in the cytoplasm. It catalyses the reaction (S)-2,3,4,5-tetrahydrodipicolinate + NAD(+) + H2O = (2S,4S)-4-hydroxy-2,3,4,5-tetrahydrodipicolinate + NADH + H(+). It carries out the reaction (S)-2,3,4,5-tetrahydrodipicolinate + NADP(+) + H2O = (2S,4S)-4-hydroxy-2,3,4,5-tetrahydrodipicolinate + NADPH + H(+). The protein operates within amino-acid biosynthesis; L-lysine biosynthesis via DAP pathway; (S)-tetrahydrodipicolinate from L-aspartate: step 4/4. Catalyzes the conversion of 4-hydroxy-tetrahydrodipicolinate (HTPA) to tetrahydrodipicolinate. The sequence is that of 4-hydroxy-tetrahydrodipicolinate reductase from Prochlorococcus marinus (strain SARG / CCMP1375 / SS120).